The primary structure comprises 604 residues: Proline--tRNA ligase (604 aa).

This sequence belongs to the class-II aminoacyl-tRNA synthetase family. ProS type 1 subfamily. In terms of assembly, homodimer.

It localises to the cytoplasm. It carries out the reaction tRNA(Pro) + L-proline + ATP = L-prolyl-tRNA(Pro) + AMP + diphosphate. Catalyzes the attachment of proline to tRNA(Pro) in a two-step reaction: proline is first activated by ATP to form Pro-AMP and then transferred to the acceptor end of tRNA(Pro). As ProRS can inadvertently accommodate and process non-cognate amino acids such as alanine and cysteine, to avoid such errors it has two additional distinct editing activities against alanine. One activity is designated as 'pretransfer' editing and involves the tRNA(Pro)-independent hydrolysis of activated Ala-AMP. The other activity is designated 'posttransfer' editing and involves deacylation of mischarged Ala-tRNA(Pro). The misacylated Cys-tRNA(Pro) is not edited by ProRS. The protein is Proline--tRNA ligase of Trichormus variabilis (strain ATCC 29413 / PCC 7937) (Anabaena variabilis).